The sequence spans 204 residues: NAD(P)H dehydrogenase (quinone) (204 aa).

The region spanning 4 to 195 is the Flavodoxin-like domain; the sequence is IQIVFYSMYG…AIARFQGAHV (192 aa). FMN contacts are provided by residues 10-15 and 83-85; these read SMYGHI and TRF. Residue Tyr12 participates in NAD(+) binding. A substrate-binding site is contributed by Trp103. Residues 118-124 and His139 each bind FMN; that span reads STATQHG.

The protein belongs to the WrbA family. It depends on FMN as a cofactor.

It catalyses the reaction a quinone + NADH + H(+) = a quinol + NAD(+). It carries out the reaction a quinone + NADPH + H(+) = a quinol + NADP(+). In Trichlorobacter lovleyi (strain ATCC BAA-1151 / DSM 17278 / SZ) (Geobacter lovleyi), this protein is NAD(P)H dehydrogenase (quinone).